A 579-amino-acid chain; its full sequence is Arginine--tRNA ligase (579 aa).

Positions 127-137 (PNLAKEMHVGH) match the 'HIGH' region motif.

This sequence belongs to the class-I aminoacyl-tRNA synthetase family. Monomer.

Its subcellular location is the cytoplasm. It catalyses the reaction tRNA(Arg) + L-arginine + ATP = L-arginyl-tRNA(Arg) + AMP + diphosphate. The protein is Arginine--tRNA ligase of Ectopseudomonas mendocina (strain ymp) (Pseudomonas mendocina).